A 237-amino-acid chain; its full sequence is Ribonuclease 3 (237 aa).

The RNase III domain occupies 4-130 (IQILFQTLNI…LFGAIYLDLG (127 aa)). Residue Glu-45 participates in Mg(2+) binding. Asp-49 is an active-site residue. 2 residues coordinate Mg(2+): Asp-116 and Glu-119. Glu-119 is an active-site residue. The DRBM domain maps to 154–222 (DFKTQLQEIV…AQQALSKVAK (69 aa)).

This sequence belongs to the ribonuclease III family. In terms of assembly, homodimer. Mg(2+) is required as a cofactor.

The protein resides in the cytoplasm. It carries out the reaction Endonucleolytic cleavage to 5'-phosphomonoester.. Functionally, digests double-stranded RNA. Involved in the processing of primary rRNA transcript to yield the immediate precursors to the large and small rRNAs (23S and 16S). Processes some mRNAs, and tRNAs when they are encoded in the rRNA operon. Processes pre-crRNA and tracrRNA of type II CRISPR loci if present in the organism. The sequence is that of Ribonuclease 3 from Aster yellows witches'-broom phytoplasma (strain AYWB).